A 491-amino-acid polypeptide reads, in one-letter code: MERPALLQNGEHGAVGSLETKTTTRLMPKPFSIESLIATQTPATVSASASIAASPPSPPEDHEQEQEQELSARAMVASSALGLTQFPLYNPWLHGYFAQNHERLTHLIAGGGCYLGSPVGNPFAGKEPSHPHPPPPHALDKSPLPHPLDTRFLPFNASAAAAAASAATPTDLSYRRLAELMNQDYVHNLSVNARLQHMAVAGRLQEDHPSHSLMHLQEPMLLQANPFSPAKSVSHSPVEPTLDVGVDEDYECSGDSSSDISLTLSPMPRNCNRELDKSRNGAYTNSDSEDCSDDEGAHSHHDASGLGGKDSQGNGSGSSSSKSRRRRTAFTSEQLLELEREFHAKKYLSLTERSQIATSLKLSEVQVKIWFQNRRAKWKRVKAGLTSHGLGRNGSASGTKIVVPIPVHVNRFAVRSQHQQLEKMCLSGPKPDLRKKLSTEAMSGFEKFNGGGLGGSAPSSSTASVGAGSVGMGLALGIGVTTPLSLGRSIY.

Disordered regions lie at residues 1-23 (MERPALLQNGEHGAVGSLETKTT), 46-69 (SASASIAASPPSPPEDHEQEQEQE), 124-146 (AGKEPSHPHPPPPHALDKSPLPH), and 227-329 (FSPA…RRTA). Residues 254-264 (GDSSSDISLTL) show a composition bias toward polar residues. A compositionally biased stretch (gly residues) spans 305-316 (GLGGKDSQGNGS). Residues 323-382 (SRRRRTAFTSEQLLELEREFHAKKYLSLTERSQIATSLKLSEVQVKIWFQNRRAKWKRVK) constitute a DNA-binding region (homeobox).

The protein resides in the nucleus. Functionally, plays a regulatory role in neural branching of the tracheae: segment-specific aspects of these neural branching patterns appear to be generated by homeotic regulation of expression. The chain is Homeobox protein unplugged from Drosophila pseudoobscura pseudoobscura (Fruit fly).